Reading from the N-terminus, the 475-residue chain is Putative aldehyde dehydrogenase (475 aa).

Residues 146–147 and 223–224 each bind NAD(+); these read WN and GS. The active-site Proton acceptor is the Glu245. Leu246 provides a ligand contact to NAD(+). The active-site Nucleophile is the Cys279. Glu379 serves as a coordination point for NAD(+).

It belongs to the aldehyde dehydrogenase family.

It catalyses the reaction an aldehyde + NAD(+) + H2O = a carboxylate + NADH + 2 H(+). The chain is Putative aldehyde dehydrogenase from Staphylococcus aureus (strain bovine RF122 / ET3-1).